Here is a 441-residue protein sequence, read N- to C-terminus: ATP-dependent RNA helicase SUB2-1 (441 aa).

A compositionally biased stretch (acidic residues) spans 1–19 (MSHEGEEDLLEYSDNEQDI). The segment at 1-46 (MSHEGEEDLLEYSDNEQDIQVDASKAAEPSELDATTAEDASNGDAE) is disordered. The short motif at 57–85 (TGFKDFLLKPELARAIIDCGFEHPSEVQQ) is the Q motif element. Residues 88 to 263 (IPQSIHGTDV…RRFLQNPLEI (176 aa)) form the Helicase ATP-binding domain. An ATP-binding site is contributed by 101-108 (AKSGLGKT). A DECD box motif is present at residues 210–213 (DECD). Residues 291–436 (KLAQLLDDLE…EFPEEGIDPS (146 aa)) form the Helicase C-terminal domain.

This sequence belongs to the DEAD box helicase family. DECD subfamily.

It is found in the nucleus. The catalysed reaction is ATP + H2O = ADP + phosphate + H(+). Its function is as follows. ATP-binding RNA helicase involved in transcription elongation and required for the export of mRNA out of the nucleus. SUB2 also plays a role in pre-mRNA splicing and spliceosome assembly. May be involved in rDNA and telomeric silencing, and maintenance of genome integrity. The polypeptide is ATP-dependent RNA helicase SUB2-1 (SUB2-1) (Vanderwaltozyma polyspora (strain ATCC 22028 / DSM 70294 / BCRC 21397 / CBS 2163 / NBRC 10782 / NRRL Y-8283 / UCD 57-17) (Kluyveromyces polysporus)).